A 225-amino-acid chain; its full sequence is Phosphatidylserine decarboxylase proenzyme (225 aa).

Ser-195 functions as the Schiff-base intermediate with substrate; via pyruvic acid in the catalytic mechanism. Ser-195 is modified (pyruvic acid (Ser); by autocatalysis).

Belongs to the phosphatidylserine decarboxylase family. PSD-A subfamily. Heterodimer of a large membrane-associated beta subunit and a small pyruvoyl-containing alpha subunit. Pyruvate serves as cofactor. Is synthesized initially as an inactive proenzyme. Formation of the active enzyme involves a self-maturation process in which the active site pyruvoyl group is generated from an internal serine residue via an autocatalytic post-translational modification. Two non-identical subunits are generated from the proenzyme in this reaction, and the pyruvate is formed at the N-terminus of the alpha chain, which is derived from the carboxyl end of the proenzyme. The post-translation cleavage follows an unusual pathway, termed non-hydrolytic serinolysis, in which the side chain hydroxyl group of the serine supplies its oxygen atom to form the C-terminus of the beta chain, while the remainder of the serine residue undergoes an oxidative deamination to produce ammonia and the pyruvoyl prosthetic group on the alpha chain.

It is found in the cell membrane. The catalysed reaction is a 1,2-diacyl-sn-glycero-3-phospho-L-serine + H(+) = a 1,2-diacyl-sn-glycero-3-phosphoethanolamine + CO2. The protein operates within phospholipid metabolism; phosphatidylethanolamine biosynthesis; phosphatidylethanolamine from CDP-diacylglycerol: step 2/2. In terms of biological role, catalyzes the formation of phosphatidylethanolamine (PtdEtn) from phosphatidylserine (PtdSer). In Gluconobacter oxydans (strain 621H) (Gluconobacter suboxydans), this protein is Phosphatidylserine decarboxylase proenzyme.